Consider the following 149-residue polypeptide: SsrA-binding protein (149 aa).

Positions 123–149 (KQFDKRETEKQRDWQREKARIMKGGKE) are disordered.

This sequence belongs to the SmpB family.

The protein resides in the cytoplasm. In terms of biological role, required for rescue of stalled ribosomes mediated by trans-translation. Binds to transfer-messenger RNA (tmRNA), required for stable association of tmRNA with ribosomes. tmRNA and SmpB together mimic tRNA shape, replacing the anticodon stem-loop with SmpB. tmRNA is encoded by the ssrA gene; the 2 termini fold to resemble tRNA(Ala) and it encodes a 'tag peptide', a short internal open reading frame. During trans-translation Ala-aminoacylated tmRNA acts like a tRNA, entering the A-site of stalled ribosomes, displacing the stalled mRNA. The ribosome then switches to translate the ORF on the tmRNA; the nascent peptide is terminated with the 'tag peptide' encoded by the tmRNA and targeted for degradation. The ribosome is freed to recommence translation, which seems to be the essential function of trans-translation. The sequence is that of SsrA-binding protein from Cupriavidus taiwanensis (strain DSM 17343 / BCRC 17206 / CCUG 44338 / CIP 107171 / LMG 19424 / R1) (Ralstonia taiwanensis (strain LMG 19424)).